Here is a 170-residue protein sequence, read N- to C-terminus: Tubulin polymerization-promoting protein family member 2 (170 aa).

A compositionally biased stretch (low complexity) spans 105–117; sequence TTGVTKSTTVGGV. A disordered region spans residues 105–170; that stretch reads TTGVTKSTTV…GAGTYDKKNQ (66 aa). Residues 129–149 show a composition bias toward basic and acidic residues; the sequence is THKERFDESGKGKGIEGREET.

Belongs to the TPPP family. In terms of tissue distribution, only expressed in male reproductive organs, including testis. Expressed in elongating spermatids at stages IV-VIII of the seminiferous epithelial cycle in testis and in mature sperm in the epididymis.

It localises to the cytoplasm. The protein resides in the cytosol. It is found in the cell projection. Its subcellular location is the cilium. The protein localises to the flagellum. Its function is as follows. Probable regulator of microtubule dynamics required for sperm motility. In contrast to other members of the family, has no microtubule bundling activity. This is Tubulin polymerization-promoting protein family member 2 from Mus musculus (Mouse).